Consider the following 581-residue polypeptide: Putative carboxypeptidase YOL153C (581 aa).

At 1 to 29 (MTETHHAPLPDVYPSSKQPTSSTYSKCKK) the chain is on the cytoplasmic side. K17 participates in a covalent cross-link: Glycyl lysine isopeptide (Lys-Gly) (interchain with G-Cter in ubiquitin). The chain crosses the membrane as a helical; Signal-anchor for type II membrane protein span at residues 30–46 (FGLPLIGLLTLLLAYIS). The Extracellular portion of the chain corresponds to 47 to 581 (SFTKPVPNST…IVNVNEYGHD (535 aa)). 2 N-linked (GlcNAc...) asparagine glycosylation sites follow: N54 and N76. H170 contributes to the Zn(2+) binding site. D172 is an active-site residue. D207 is a binding site for Zn(2+). The active-site Proton acceptor is E241. The Zn(2+) site is built by E242 and D270. N335 and N428 each carry an N-linked (GlcNAc...) asparagine glycan. A Zn(2+)-binding site is contributed by H550.

It belongs to the peptidase M20A family. The cofactor is Zn(2+).

Its subcellular location is the membrane. The sequence is that of Putative carboxypeptidase YOL153C from Saccharomyces cerevisiae (strain ATCC 204508 / S288c) (Baker's yeast).